A 432-amino-acid chain; its full sequence is Trigger factor (432 aa).

The 86-residue stretch at 161–246 folds into the PPIase FKBP-type domain; that stretch reads EDRVTIDFTG…LKKVEERELP (86 aa).

Belongs to the FKBP-type PPIase family. Tig subfamily.

The protein localises to the cytoplasm. It carries out the reaction [protein]-peptidylproline (omega=180) = [protein]-peptidylproline (omega=0). Functionally, involved in protein export. Acts as a chaperone by maintaining the newly synthesized protein in an open conformation. Functions as a peptidyl-prolyl cis-trans isomerase. This chain is Trigger factor, found in Citrobacter koseri (strain ATCC BAA-895 / CDC 4225-83 / SGSC4696).